The following is a 224-amino-acid chain: Cutinase 1 (224 aa).

The N-terminal stretch at 1–16 (MKFLSVLSLAITLAAA) is a signal peptide. A disulfide bridge connects residues Cys46 and Cys125. Ser136 functions as the Nucleophile in the catalytic mechanism. A disulfide bridge links Cys187 with Cys194. The active site involves Asp191. The active-site Proton donor/acceptor is the His204.

This sequence belongs to the cutinase family. In terms of processing, the 2 disulfide bonds play a critical role in holding the catalytic residues in juxta-position; reduction of the disulfide bridges results in the complete inactivation of the enzyme. The N-terminus is blocked.

The protein resides in the secreted. It catalyses the reaction cutin + H2O = cutin monomers.. Its activity is regulated as follows. Inhibited by diisopropyl fluorophosphate (DFP). Functionally, catalyzes the hydrolysis of complex carboxylic polyesters found in the cell wall of plants. Degrades cutin, a macromolecule that forms the structure of the plant cuticle. Allows pathogenic fungi to penetrate through the cuticular barrier into the host plant during the initial stage of fungal infection. This Colletotrichum gloeosporioides (Anthracnose fungus) protein is Cutinase 1 (CUTA).